The sequence spans 867 residues: Alanine--tRNA ligase (867 aa).

Zn(2+)-binding residues include histidine 558, histidine 562, cysteine 660, and histidine 664.

It belongs to the class-II aminoacyl-tRNA synthetase family. The cofactor is Zn(2+).

It is found in the cytoplasm. It catalyses the reaction tRNA(Ala) + L-alanine + ATP = L-alanyl-tRNA(Ala) + AMP + diphosphate. In terms of biological role, catalyzes the attachment of alanine to tRNA(Ala) in a two-step reaction: alanine is first activated by ATP to form Ala-AMP and then transferred to the acceptor end of tRNA(Ala). Also edits incorrectly charged Ser-tRNA(Ala) and Gly-tRNA(Ala) via its editing domain. The sequence is that of Alanine--tRNA ligase from Fervidobacterium nodosum (strain ATCC 35602 / DSM 5306 / Rt17-B1).